A 342-amino-acid polypeptide reads, in one-letter code: Photosystem II assembly lipoprotein Ycf48 (342 aa).

Residues Met-1–Ser-28 form the signal peptide. Cys-29 carries N-palmitoyl cysteine lipidation. Cys-29 is lipidated: S-diacylglycerol cysteine. Residues Arg-196–Arg-220 carry the Arg-rich patch motif. Positions Met-340–Pro-342 are excised as a propeptide.

Belongs to the Ycf48 family. In terms of assembly, part of early PSII assembly complexes which includes D1 (psbA) and PsbI; not found in mature PSII. By two-hybrid analysis in yeast interacts with precursor and intermediate forms of D1, but less with mature D1. Binds to the lumenal side of PSI and PSII complexes. Coimmunoprecipitates with YidC. Purified chlorophyll- and carotenoid-containing photosystem II (PSII) assembly intermediate complex RCII* (iD1, D1, D2, PsbE, PsbF, PsbI, Ycf39, Ycf48, HliC and HliD). In terms of processing, the last 3 residues are removed in the mature protein.

It is found in the cellular thylakoid membrane. In terms of biological role, a factor required for optimal assembly of photosystem II (PSII) which acts in the early stages of PSII assembly. Also plays a role in replacement of photodamaged D1 (psbA). May interact with precursor D1 to prevent its premature processing before association with D2 (psbD). May also play a role in chlorophyll insertion into chlorophyll-binding proteins. Increasing levels of chlorophyll precursors partially suppresses deletion of this protein, supporting the idea that Ycf48 assists YidC in synthesis of chlorophyll-binding proteins. The Ycf39-Hlip complex binds D1 at an early stage of PSII assembly along with Ycf48, ribosomes and ChlG, the last enzyme in chlorophyll biosynthesis; it may be involved in chlorophyll reuse and delivery to D1 in the initial stages of PSII assembly. The polypeptide is Photosystem II assembly lipoprotein Ycf48 (Synechocystis sp. (strain ATCC 27184 / PCC 6803 / Kazusa)).